Consider the following 453-residue polypeptide: Cytochrome b-c1 complex subunit 2, mitochondrial (453 aa).

Residues 1 to 14 (MKLLTRAGSFSRFY) constitute a mitochondrion transit peptide. Lys66, Lys199, and Lys250 each carry N6-acetyllysine.

Belongs to the peptidase M16 family. UQCRC2/QCR2 subfamily. As to quaternary structure, component of the ubiquinol-cytochrome c oxidoreductase (cytochrome b-c1 complex, complex III, CIII), a multisubunit enzyme composed of 11 subunits. The complex is composed of 3 respiratory subunits cytochrome b, cytochrome c1 and Rieske protein UQCRFS1, 2 core protein subunits UQCRC1/QCR1 and UQCRC2/QCR2, and 6 low-molecular weight protein subunits UQCRH/QCR6, UQCRB/QCR7, UQCRQ/QCR8, UQCR10/QCR9, UQCR11/QCR10 and subunit 9, the cleavage product of Rieske protein UQCRFS1. The complex exists as an obligatory dimer and forms supercomplexes (SCs) in the inner mitochondrial membrane with NADH-ubiquinone oxidoreductase (complex I, CI) and cytochrome c oxidase (complex IV, CIV), resulting in different assemblies (supercomplex SCI(1)III(2)IV(1) and megacomplex MCI(2)III(2)IV(2)). Interacts with RAB5IF. Interacts with STMP1.

It is found in the mitochondrion inner membrane. Functionally, component of the ubiquinol-cytochrome c oxidoreductase, a multisubunit transmembrane complex that is part of the mitochondrial electron transport chain which drives oxidative phosphorylation. The respiratory chain contains 3 multisubunit complexes succinate dehydrogenase (complex II, CII), ubiquinol-cytochrome c oxidoreductase (cytochrome b-c1 complex, complex III, CIII) and cytochrome c oxidase (complex IV, CIV), that cooperate to transfer electrons derived from NADH and succinate to molecular oxygen, creating an electrochemical gradient over the inner membrane that drives transmembrane transport and the ATP synthase. The cytochrome b-c1 complex catalyzes electron transfer from ubiquinol to cytochrome c, linking this redox reaction to translocation of protons across the mitochondrial inner membrane, with protons being carried across the membrane as hydrogens on the quinol. In the process called Q cycle, 2 protons are consumed from the matrix, 4 protons are released into the intermembrane space and 2 electrons are passed to cytochrome c. The 2 core subunits UQCRC1/QCR1 and UQCRC2/QCR2 are homologous to the 2 mitochondrial-processing peptidase (MPP) subunits beta-MPP and alpha-MPP respectively, and they seem to have preserved their MPP processing properties. May be involved in the in situ processing of UQCRFS1 into the mature Rieske protein and its mitochondrial targeting sequence (MTS)/subunit 9 when incorporated into complex III. In Homo sapiens (Human), this protein is Cytochrome b-c1 complex subunit 2, mitochondrial (UQCRC2).